Reading from the N-terminus, the 295-residue chain is Ethanolamine ammonia-lyase small subunit (295 aa).

Positions 207, 228, and 258 each coordinate adenosylcob(III)alamin.

It belongs to the EutC family. In terms of assembly, the basic unit is a heterodimer which dimerizes to form tetramers. The heterotetramers trimerize; 6 large subunits form a core ring with 6 small subunits projecting outwards. Requires adenosylcob(III)alamin as cofactor.

It localises to the bacterial microcompartment. The enzyme catalyses ethanolamine = acetaldehyde + NH4(+). Its pathway is amine and polyamine degradation; ethanolamine degradation. Functionally, catalyzes the deamination of various vicinal amino-alcohols to oxo compounds. Allows this organism to utilize ethanolamine as the sole source of nitrogen and carbon in the presence of external vitamin B12. In Escherichia coli (strain SMS-3-5 / SECEC), this protein is Ethanolamine ammonia-lyase small subunit.